A 125-amino-acid chain; its full sequence is MPTISQLVRKPREVSVIKSKSPALENCPQRRGVCTRVYTTTPKKPNSALRKVAKVRLTNGYEVISYIGGEGHNLQEHSVVLVRGGRVKDLPGVRYHIVRGSLDLQGVKDRKQARSKYGAKRPKKA.

D89 carries the 3-methylthioaspartic acid modification.

The protein belongs to the universal ribosomal protein uS12 family. Part of the 30S ribosomal subunit. Contacts proteins S8 and S17. May interact with IF1 in the 30S initiation complex.

Functionally, with S4 and S5 plays an important role in translational accuracy. Interacts with and stabilizes bases of the 16S rRNA that are involved in tRNA selection in the A site and with the mRNA backbone. Located at the interface of the 30S and 50S subunits, it traverses the body of the 30S subunit contacting proteins on the other side and probably holding the rRNA structure together. The combined cluster of proteins S8, S12 and S17 appears to hold together the shoulder and platform of the 30S subunit. The chain is Small ribosomal subunit protein uS12 from Bordetella petrii (strain ATCC BAA-461 / DSM 12804 / CCUG 43448).